A 161-amino-acid polypeptide reads, in one-letter code: Phosphopantetheine adenylyltransferase (161 aa).

Serine 11 serves as a coordination point for substrate. ATP contacts are provided by residues 11–12 (SF) and histidine 19. 3 residues coordinate substrate: lysine 43, leucine 75, and arginine 89. ATP contacts are provided by residues 90 to 92 (GLR), glutamate 100, and 125 to 131 (YSFISSS).

Belongs to the bacterial CoaD family. In terms of assembly, homohexamer. Mg(2+) is required as a cofactor.

It localises to the cytoplasm. It catalyses the reaction (R)-4'-phosphopantetheine + ATP + H(+) = 3'-dephospho-CoA + diphosphate. It functions in the pathway cofactor biosynthesis; coenzyme A biosynthesis; CoA from (R)-pantothenate: step 4/5. Reversibly transfers an adenylyl group from ATP to 4'-phosphopantetheine, yielding dephospho-CoA (dPCoA) and pyrophosphate. The polypeptide is Phosphopantetheine adenylyltransferase (Staphylococcus haemolyticus (strain JCSC1435)).